Here is a 156-residue protein sequence, read N- to C-terminus: 6,7-dimethyl-8-ribityllumazine synthase (156 aa).

5-amino-6-(D-ribitylamino)uracil is bound by residues Phe-22, 57-59 (AVE), and 81-83 (SVI). 86 to 87 (GT) is a (2S)-2-hydroxy-3-oxobutyl phosphate binding site. His-89 (proton donor) is an active-site residue. Phe-114 contributes to the 5-amino-6-(D-ribitylamino)uracil binding site. Arg-128 contributes to the (2S)-2-hydroxy-3-oxobutyl phosphate binding site.

This sequence belongs to the DMRL synthase family. As to quaternary structure, forms an icosahedral capsid composed of 60 subunits, arranged as a dodecamer of pentamers.

The enzyme catalyses (2S)-2-hydroxy-3-oxobutyl phosphate + 5-amino-6-(D-ribitylamino)uracil = 6,7-dimethyl-8-(1-D-ribityl)lumazine + phosphate + 2 H2O + H(+). Its pathway is cofactor biosynthesis; riboflavin biosynthesis; riboflavin from 2-hydroxy-3-oxobutyl phosphate and 5-amino-6-(D-ribitylamino)uracil: step 1/2. Its function is as follows. Catalyzes the formation of 6,7-dimethyl-8-ribityllumazine by condensation of 5-amino-6-(D-ribitylamino)uracil with 3,4-dihydroxy-2-butanone 4-phosphate. This is the penultimate step in the biosynthesis of riboflavin. The polypeptide is 6,7-dimethyl-8-ribityllumazine synthase (Vibrio vulnificus (strain CMCP6)).